We begin with the raw amino-acid sequence, 84 residues long: Small ribosomal subunit protein uS17 (84 aa).

This sequence belongs to the universal ribosomal protein uS17 family. Part of the 30S ribosomal subunit.

Its function is as follows. One of the primary rRNA binding proteins, it binds specifically to the 5'-end of 16S ribosomal RNA. The polypeptide is Small ribosomal subunit protein uS17 (Vibrio vulnificus (strain CMCP6)).